We begin with the raw amino-acid sequence, 354 residues long: Protein-arginine kinase (354 aa).

The 231-residue stretch at 24 to 254 (IVLSSRIRLA…QQIIQQEKMA (231 aa)) folds into the Phosphagen kinase C-terminal domain. Residues 27–31 (SSRIR), His92, Arg125, 176–180 (RASVM), and 207–212 (RGIYGE) contribute to the ATP site. Positions 337–342 (RDYRRA) match the RDXXRA motif of the pArg binding pocket involved in allosteric regulation motif.

This sequence belongs to the ATP:guanido phosphotransferase family.

The catalysed reaction is L-arginyl-[protein] + ATP = N(omega)-phospho-L-arginyl-[protein] + ADP + H(+). Appears to be allosterically activated by the binding of pArg-containing polypeptides to the pArg-binding pocket localized in the C-terminal domain of McsB. Catalyzes the specific phosphorylation of arginine residues in a large number of proteins. Is part of the bacterial stress response system. Protein arginine phosphorylation has a physiologically important role and is involved in the regulation of many critical cellular processes, such as protein homeostasis, motility, competence, and stringent and stress responses, by regulating gene expression and protein activity. This is Protein-arginine kinase from Bacillus cereus (strain AH187).